The sequence spans 374 residues: Histone acetyltransferase type B catalytic subunit (374 aa).

Interaction with histone H4 N-terminus stretches follow at residues 42-44 and 194-196; these read DSE and YKY. The 169-residue stretch at 135–303 folds into the N-acetyltransferase domain; sequence VVYKSSLVDD…ESSRKSLKLE (169 aa). Residues 197 to 205 form an interaction with HAT2 region; that stretch reads WHYLGAKSF. Acetyl-CoA contacts are provided by residues 220-222 and 227-233; these read FLI and QNKGHGS. Glu255 serves as the catalytic Proton donor/acceptor. Residues Asn258 and Arg267 each contribute to the acetyl-CoA site. At Ser354 the chain carries Phosphoserine.

This sequence belongs to the HAT1 family. In terms of assembly, component of the HAT-B complex composed of at least HAT1 and HAT2. In the cytoplasm, this complex binds to the histone H4 tail. In the nucleus, the HAT-B complex has an additional component, the histone H3/H4 chaperone HIF1.

It is found in the cytoplasm. The protein resides in the nucleus. The enzyme catalyses L-lysyl-[protein] + acetyl-CoA = N(6)-acetyl-L-lysyl-[protein] + CoA + H(+). Its function is as follows. Catalytic component of the histone acetylase B (HAT-B) complex. Acetylates 'Lys-12' of free histone H4 in the cytoplasm. The complex is also found in the nucleus, however it is not certain that it modifies histone H4 when packaged in chromatin. Histone H4 'Lys-12' acetylation is required for telomeric silencing. Has intrinsic substrate specificity that modifies lysine in recognition sequence GXGKXG. Involved in DNA double-strand break repair. In Saccharomyces cerevisiae (strain ATCC 204508 / S288c) (Baker's yeast), this protein is Histone acetyltransferase type B catalytic subunit (HAT1).